The chain runs to 542 residues: Exopolysaccharide phosphotransferase CpsY (542 aa).

The disordered stretch occupies residues Ser522–Arg542. Residues Gln533 to Arg542 are compositionally biased toward polar residues.

This sequence belongs to the stealth family.

This Mycobacterium leprae (strain TN) protein is Exopolysaccharide phosphotransferase CpsY (cpsY).